We begin with the raw amino-acid sequence, 623 residues long: Procollagen galactosyltransferase 1 (623 aa).

Residues 1–30 (MAAAPRACKGHGRPLPVLLLLLLLALPPLG) form the signal peptide. 3 N-linked (GlcNAc...) asparagine glycosylation sites follow: N97, N185, and N382. The segment covering 589–607 (RAKSQKMREQQALSREAKN) has biased composition (basic and acidic residues). The tract at residues 589 to 623 (RAKSQKMREQQALSREAKNSDVLQSPLDSAARDEL) is disordered. The Prevents secretion from ER signature appears at 620–623 (RDEL).

It belongs to the glycosyltransferase 25 family. In terms of processing, N-glycosylated.

It is found in the endoplasmic reticulum lumen. It carries out the reaction (5R)-5-hydroxy-L-lysyl-[collagen] + UDP-alpha-D-galactose = (5R)-5-O-(beta-D-galactosyl)-5-hydroxy-L-lysyl-[collagen] + UDP + H(+). Functionally, beta-galactosyltransferase that transfers beta-galactose to hydroxylysine residues of type I collagen. By acting on collagen glycosylation, facilitates the formation of collagen triple helix. Also involved in the biosynthesis of collagen type IV. The sequence is that of Procollagen galactosyltransferase 1 (COLGALT1) from Bos taurus (Bovine).